The chain runs to 298 residues: Glycine--tRNA ligase alpha subunit (298 aa).

Belongs to the class-II aminoacyl-tRNA synthetase family. Tetramer of two alpha and two beta subunits.

The protein localises to the cytoplasm. The catalysed reaction is tRNA(Gly) + glycine + ATP = glycyl-tRNA(Gly) + AMP + diphosphate. The polypeptide is Glycine--tRNA ligase alpha subunit (Helicobacter pylori (strain P12)).